We begin with the raw amino-acid sequence, 141 residues long: Small ribosomal subunit protein bS6 (141 aa).

The segment at 96–141 is disordered; that stretch reads VTGPSEMLKAEENRSERRERRERPEHADGAEGDDSNDSDNSDNADE. Positions 103-124 are enriched in basic and acidic residues; it reads LKAEENRSERRERRERPEHADG. Acidic residues predominate over residues 125–141; sequence AEGDDSNDSDNSDNADE.

The protein belongs to the bacterial ribosomal protein bS6 family.

Functionally, binds together with bS18 to 16S ribosomal RNA. The chain is Small ribosomal subunit protein bS6 from Pseudomonas entomophila (strain L48).